A 386-amino-acid polypeptide reads, in one-letter code: Ribonuclease D (386 aa).

The 172-residue stretch at 3-174 folds into the 3'-5' exonuclease domain; the sequence is HTITTTDELA…EIYEYLSAEL (172 aa). The HRDC domain occupies 213 to 294; it reads SGRVVAIAQQ…ARGMSVPNSE (82 aa).

It belongs to the RNase D family. The cofactor is a divalent metal cation.

It localises to the cytoplasm. It carries out the reaction Exonucleolytic cleavage that removes extra residues from the 3'-terminus of tRNA to produce 5'-mononucleotides.. Its function is as follows. Exonuclease involved in the 3' processing of various precursor tRNAs. Initiates hydrolysis at the 3'-terminus of an RNA molecule and releases 5'-mononucleotides. The polypeptide is Ribonuclease D (Jannaschia sp. (strain CCS1)).